Reading from the N-terminus, the 403-residue chain is tRNA pseudouridine synthase 4 (403 aa).

Residue aspartate 75 is the Nucleophile of the active site.

The protein belongs to the pseudouridine synthase TruB family.

Its subcellular location is the nucleus. It is found in the mitochondrion. The enzyme catalyses uridine(55) in tRNA = pseudouridine(55) in tRNA. The catalysed reaction is a uridine in mRNA = a pseudouridine in mRNA. In terms of biological role, responsible for synthesis of pseudouridine from uracil-55 in the psi GC loop of transfer RNAs. Also catalyzes pseudouridylation of mRNAs with the consensus sequence 5'-GGUUCRA-3'. This Saccharomyces cerevisiae (strain ATCC 204508 / S288c) (Baker's yeast) protein is tRNA pseudouridine synthase 4 (PUS4).